We begin with the raw amino-acid sequence, 62 residues long: AGAYTLFGKAIPPHHLAIATIGTVVALVAPKPWSPKVKLEPKIDASSPEEEKFIKEYLEKHL.

The helical transmembrane segment at 14-30 (HHLAIATIGTVVALVAP) threads the bilayer.

In terms of assembly, F-type ATP synthases have 2 components, the catalytic core F(1) and the membrane-embedded component F(0), linked together by a central stalk and a peripheral stalk. The central stalk, also called rotor shaft, is often seen as part of F(1). The peripheral stalk is seen as part of F(0). F(0) contains the membrane channel next to the rotor. F-type ATP synthases form dimers but each monomer functions independently in ATP generation. The dimer consists of 18 different polypeptides: ATP1 (subunit alpha, part of F(1), 3 molecules per monomer), ATP2 (subunit beta, part of F(1), 3 molecules per monomer), ATP3 (subunit gamma, part of the central stalk), ATP4 (subunit b, part of the peripheral stalk), ATP5/OSCP (subunit 5/OSCP, part of the peripheral stalk), ATP6 (subunit a, part of the peripheral stalk), ATP7 (subunit d, part of the peripheral stalk), ATP8 (subunit 8, part of the peripheral stalk), OLI1 (subunit c, part of the rotor, 10 molecules per monomer), ATP14 (subunit h, part of the peripheral stalk), ATP15 (subunit epsilon, part of the central stalk), ATP16 (subunit delta, part of the central stalk), ATP17 (subunit f, part of the peripheral stalk), ATP18 (subunit i/j, part of the peripheral stalk). Dimer-specific subunits are ATP19 (subunit k, at interface between monomers), ATP20 (subunit g, at interface between monomers), TIM11 (subunit e, at interface between monomers). Also contains subunit L.

The protein resides in the mitochondrion inner membrane. In terms of biological role, mitochondrial membrane ATP synthase (F(1)F(0) ATP synthase or Complex V) produces ATP from ADP in the presence of a proton gradient across the membrane which is generated by electron transport complexes of the respiratory chain. F-type ATP synthases consist of two structural domains, F(1) - containing the extramembraneous catalytic core, and F(0) - containing the membrane proton channel, linked together by a central stalk and a peripheral stalk. During catalysis, ATP synthesis in the catalytic domain of F(1) is coupled via a rotary mechanism of the central stalk subunits to proton translocation. Part of the complex F(0) domain. Minor subunit located with subunit a/ATP6 in the membrane. The K chain binds the dimeric form by interacting with the G and E chains. The polypeptide is ATP synthase subunit K, mitochondrial (Pichia angusta (Yeast)).